We begin with the raw amino-acid sequence, 205 residues long: Ribonuclease HII (205 aa).

Residues R22 to R205 form the RNase H type-2 domain. A divalent metal cation-binding residues include D28, E29, and D120.

It belongs to the RNase HII family. The cofactor is Mn(2+). Mg(2+) serves as cofactor.

It localises to the cytoplasm. It catalyses the reaction Endonucleolytic cleavage to 5'-phosphomonoester.. Functionally, endonuclease that specifically degrades the RNA of RNA-DNA hybrids. The polypeptide is Ribonuclease HII (Caldicellulosiruptor saccharolyticus (strain ATCC 43494 / DSM 8903 / Tp8T 6331)).